A 216-amino-acid chain; its full sequence is Ribosomal RNA small subunit methyltransferase G (216 aa).

S-adenosyl-L-methionine-binding positions include Gly-83, Met-88, 134–135 (VE), and Arg-149.

It belongs to the methyltransferase superfamily. RNA methyltransferase RsmG family.

It localises to the cytoplasm. The catalysed reaction is guanosine(527) in 16S rRNA + S-adenosyl-L-methionine = N(7)-methylguanosine(527) in 16S rRNA + S-adenosyl-L-homocysteine. Its function is as follows. Specifically methylates the N7 position of guanine in position 527 of 16S rRNA. In Pseudomonas entomophila (strain L48), this protein is Ribosomal RNA small subunit methyltransferase G.